The primary structure comprises 291 residues: Nucleotide-binding protein lin2617 (291 aa).

Residue 13-20 (GMSGAGKT) coordinates ATP. 63-66 (DLRG) is a GTP binding site.

Belongs to the RapZ-like family.

In terms of biological role, displays ATPase and GTPase activities. The protein is Nucleotide-binding protein lin2617 of Listeria innocua serovar 6a (strain ATCC BAA-680 / CLIP 11262).